We begin with the raw amino-acid sequence, 209 residues long: ATP-dependent Clp protease proteolytic subunit (209 aa).

The active-site Nucleophile is Ser106. Residue His131 is part of the active site.

The protein belongs to the peptidase S14 family. As to quaternary structure, fourteen ClpP subunits assemble into 2 heptameric rings which stack back to back to give a disk-like structure with a central cavity, resembling the structure of eukaryotic proteasomes.

The protein localises to the cytoplasm. The catalysed reaction is Hydrolysis of proteins to small peptides in the presence of ATP and magnesium. alpha-casein is the usual test substrate. In the absence of ATP, only oligopeptides shorter than five residues are hydrolyzed (such as succinyl-Leu-Tyr-|-NHMec, and Leu-Tyr-Leu-|-Tyr-Trp, in which cleavage of the -Tyr-|-Leu- and -Tyr-|-Trp bonds also occurs).. In terms of biological role, cleaves peptides in various proteins in a process that requires ATP hydrolysis. Has a chymotrypsin-like activity. Plays a major role in the degradation of misfolded proteins. In Brucella melitensis biotype 2 (strain ATCC 23457), this protein is ATP-dependent Clp protease proteolytic subunit.